A 473-amino-acid chain; its full sequence is Major myo-inositol transporter IolT (473 aa).

Transmembrane regions (helical) follow at residues 14–34 (IILV…VLNG), 49–69 (AFTE…GAVF), 83–103 (ILFL…APNV), 111–131 (FVLG…LAEM), 146–166 (LMIV…GTTM), 172–192 (VWRF…FGMI), 256–276 (IVFI…NSIM), 295–315 (IGNI…IWLL), 325–345 (MTGL…SLVL), 350–370 (ALPY…QGAI), 389–409 (LGMG…SFTF), and 411–431 (ILLA…LGIC).

This sequence belongs to the major facilitator superfamily. Sugar transporter (TC 2.A.1.1) family.

The protein localises to the cell membrane. Its pathway is polyol metabolism; myo-inositol degradation into acetyl-CoA. Its function is as follows. Major myo-inositol uptake transporter. The sequence is that of Major myo-inositol transporter IolT (iolT) from Bacillus subtilis (strain 168).